We begin with the raw amino-acid sequence, 262 residues long: Acyl-[acyl-carrier-protein]--UDP-N-acetylglucosamine O-acyltransferase (262 aa).

This sequence belongs to the transferase hexapeptide repeat family. LpxA subfamily. Homotrimer.

The protein localises to the cytoplasm. It catalyses the reaction a (3R)-hydroxyacyl-[ACP] + UDP-N-acetyl-alpha-D-glucosamine = a UDP-3-O-[(3R)-3-hydroxyacyl]-N-acetyl-alpha-D-glucosamine + holo-[ACP]. The protein operates within glycolipid biosynthesis; lipid IV(A) biosynthesis; lipid IV(A) from (3R)-3-hydroxytetradecanoyl-[acyl-carrier-protein] and UDP-N-acetyl-alpha-D-glucosamine: step 1/6. Its function is as follows. Involved in the biosynthesis of lipid A, a phosphorylated glycolipid that anchors the lipopolysaccharide to the outer membrane of the cell. This is Acyl-[acyl-carrier-protein]--UDP-N-acetylglucosamine O-acyltransferase from Aliivibrio salmonicida (strain LFI1238) (Vibrio salmonicida (strain LFI1238)).